A 66-amino-acid polypeptide reads, in one-letter code: Disk-determining factor A (66 aa).

Functionally, involved in cell-shape determination. Required for the formation of disks. This is Disk-determining factor A from Haloferax volcanii (strain ATCC 29605 / DSM 3757 / JCM 8879 / NBRC 14742 / NCIMB 2012 / VKM B-1768 / DS2) (Halobacterium volcanii).